Here is a 100-residue protein sequence, read N- to C-terminus: Cysteine-rich venom protein VAR1 (100 aa).

Positions 1 to 22 (MILLKLYLTLAAILCQSRGTTS) are cleaved as a signal peptide. One can recognise an SCP domain in the interval 41–81 (NKHNDLRRTVDPPAKNMLKMSWDNIIAESAKRAALRCNQNE).

It belongs to the CRISP family. In terms of processing, contains 8 disulfide bonds. As to expression, expressed by the venom gland.

It is found in the secreted. Its function is as follows. Blocks ryanodine receptors, and potassium channels. This chain is Cysteine-rich venom protein VAR1, found in Varanus acanthurus (Ridge-tailed monitor).